The chain runs to 271 residues: Cobalt import ATP-binding protein CbiO (271 aa).

An ABC transporter domain is found at 2 to 236 (LATSDLWFRY…TEAMEHAGLT (235 aa)). An ATP-binding site is contributed by 34–41 (GANGCGKS).

The protein belongs to the ABC transporter superfamily. Cobalt importer (TC 3.A.1.18.1) family. As to quaternary structure, forms an energy-coupling factor (ECF) transporter complex composed of an ATP-binding protein (A component, CbiO), a transmembrane protein (T component, CbiQ) and 2 possible substrate-capture proteins (S components, CbiM and CbiN) of unknown stoichimetry.

The protein localises to the cell inner membrane. It participates in cofactor biosynthesis; adenosylcobalamin biosynthesis. Its function is as follows. Part of the energy-coupling factor (ECF) transporter complex CbiMNOQ involved in cobalt import. Presumably responsible for energy coupling to the transport system. In Salmonella paratyphi A (strain ATCC 9150 / SARB42), this protein is Cobalt import ATP-binding protein CbiO.